Reading from the N-terminus, the 562-residue chain is Serine/threonine-protein kinase dst3 (562 aa).

One can recognise a Protein kinase domain in the interval 23 to 285; sequence FQIVEVVGSG…AQQLLSHPFI (263 aa). ATP-binding positions include 29–37 and lysine 59; that span reads VGSGSFGTV. Aspartate 154 functions as the Proton acceptor in the catalytic mechanism. Disordered stretches follow at residues 316–339 and 366–562; these read LEEQEQQRNSSGSKMVSSVPTRAS and SIMR…NVNI. A compositionally biased stretch (polar residues) spans 322–339; sequence QRNSSGSKMVSSVPTRAS. Low complexity-rich tracts occupy residues 421–431, 442–454, and 476–494; these read NNNNNNNNTTT, QQQQQQQQQNNNK, and TTPTTPTTTQPNTSTTTKT. Residues 495-522 show a composition bias toward polar residues; that stretch reads GSSLNIKPTNNVNRSTISIGQQKSPLQS. Positions 542–562 are enriched in acidic residues; sequence EDEEDEEEFNHEDYEEINVNI.

Belongs to the protein kinase superfamily. STE Ser/Thr protein kinase family. STE20 subfamily. The cofactor is Mg(2+).

The enzyme catalyses L-seryl-[protein] + ATP = O-phospho-L-seryl-[protein] + ADP + H(+). The catalysed reaction is L-threonyl-[protein] + ATP = O-phospho-L-threonyl-[protein] + ADP + H(+). This Dictyostelium discoideum (Social amoeba) protein is Serine/threonine-protein kinase dst3.